The sequence spans 206 residues: Small ribosomal subunit protein uS4 (206 aa).

The 61-residue stretch at 96-156 (TRLDNVVYRM…EKSRTQARIK (61 aa)) folds into the S4 RNA-binding domain.

This sequence belongs to the universal ribosomal protein uS4 family. In terms of assembly, part of the 30S ribosomal subunit. Contacts protein S5. The interaction surface between S4 and S5 is involved in control of translational fidelity.

Functionally, one of the primary rRNA binding proteins, it binds directly to 16S rRNA where it nucleates assembly of the body of the 30S subunit. With S5 and S12 plays an important role in translational accuracy. This is Small ribosomal subunit protein uS4 from Shewanella sp. (strain ANA-3).